The primary structure comprises 310 residues: CRAL-TRIO domain-containing protein YKL091C (310 aa).

In terms of domain architecture, CRAL-TRIO spans 101–274 (ERIKLAKMYP…KYGGTSVLHN (174 aa)).

This is CRAL-TRIO domain-containing protein YKL091C from Saccharomyces cerevisiae (strain ATCC 204508 / S288c) (Baker's yeast).